A 153-amino-acid polypeptide reads, in one-letter code: Peptide deformylase (153 aa).

C87 and H129 together coordinate Fe cation. E130 is a catalytic residue. H133 contacts Fe cation.

The protein belongs to the polypeptide deformylase family. It depends on Fe(2+) as a cofactor.

It catalyses the reaction N-terminal N-formyl-L-methionyl-[peptide] + H2O = N-terminal L-methionyl-[peptide] + formate. In terms of biological role, removes the formyl group from the N-terminal Met of newly synthesized proteins. Requires at least a dipeptide for an efficient rate of reaction. N-terminal L-methionine is a prerequisite for activity but the enzyme has broad specificity at other positions. This Dictyoglomus thermophilum (strain ATCC 35947 / DSM 3960 / H-6-12) protein is Peptide deformylase.